The chain runs to 74 residues: MFDIKAWAEYVVEWAAKDPYGFLTTVILALTPLFLASAVLSWKLAKMIEAREKEQKKKQKRQENIAKAKRLKKD.

The chain crosses the membrane as a helical span at residues 20 to 40 (YGFLTTVILALTPLFLASAVL). Residues 42 to 74 (WKLAKMIEAREKEQKKKQKRQENIAKAKRLKKD) are a coiled coil. The segment covering 55 to 66 (QKKKQKRQENIA) has biased composition (basic and acidic residues). Residues 55 to 74 (QKKKQKRQENIAKAKRLKKD) form a disordered region.

The protein belongs to the SMIM15 family.

Its subcellular location is the membrane. This Homo sapiens (Human) protein is Small integral membrane protein 15 (SMIM15).